The following is a 236-amino-acid chain: Small ribosomal subunit protein uS2c (236 aa).

It belongs to the universal ribosomal protein uS2 family.

The protein resides in the plastid. It localises to the chloroplast. The polypeptide is Small ribosomal subunit protein uS2c (rps2) (Ceratophyllum demersum (Rigid hornwort)).